Consider the following 41-residue polypeptide: Large ribosomal subunit protein bL36A (41 aa).

This sequence belongs to the bacterial ribosomal protein bL36 family.

This Vibrio cholerae serotype O1 (strain ATCC 39541 / Classical Ogawa 395 / O395) protein is Large ribosomal subunit protein bL36A.